Consider the following 107-residue polypeptide: Integration host factor subunit alpha (107 aa).

This sequence belongs to the bacterial histone-like protein family. In terms of assembly, heterodimer of an alpha and a beta chain.

This protein is one of the two subunits of integration host factor, a specific DNA-binding protein that functions in genetic recombination as well as in transcriptional and translational control. The chain is Integration host factor subunit alpha from Brucella abortus (strain S19).